The sequence spans 106 residues: Terpredoxin (106 aa).

A 2Fe-2S ferredoxin-type domain is found at 2-106; that stretch reads PRVVFIDEQS…GLIVRVPLPA (105 aa). The [2Fe-2S] cluster site is built by cysteine 40, cysteine 46, cysteine 49, and cysteine 87.

The protein belongs to the adrenodoxin/putidaredoxin family. [2Fe-2S] cluster serves as cofactor.

In terms of biological role, the oxidation of alpha-terpineol by cytochrome p450-TERP requires the participation of a flavoprotein, terpredoxin reductase, and an iron-sulfur protein, terpredoxin, to mediate the transfer of electrons from NADH to P450 for oxygen activation. This chain is Terpredoxin (terPB), found in Pseudomonas sp.